The chain runs to 364 residues: tRNA 2-selenouridine synthase (364 aa).

Residues 14–137 (LIADTPIIDV…LRQAAIQATI (124 aa)) form the Rhodanese domain. Cys97 acts as the S-selanylcysteine intermediate in catalysis.

The protein belongs to the SelU family. Monomer.

It carries out the reaction 5-methylaminomethyl-2-thiouridine(34) in tRNA + selenophosphate + (2E)-geranyl diphosphate + H2O + H(+) = 5-methylaminomethyl-2-selenouridine(34) in tRNA + (2E)-thiogeraniol + phosphate + diphosphate. The enzyme catalyses 5-methylaminomethyl-2-thiouridine(34) in tRNA + (2E)-geranyl diphosphate = 5-methylaminomethyl-S-(2E)-geranyl-thiouridine(34) in tRNA + diphosphate. It catalyses the reaction 5-methylaminomethyl-S-(2E)-geranyl-thiouridine(34) in tRNA + selenophosphate + H(+) = 5-methylaminomethyl-2-(Se-phospho)selenouridine(34) in tRNA + (2E)-thiogeraniol. The catalysed reaction is 5-methylaminomethyl-2-(Se-phospho)selenouridine(34) in tRNA + H2O = 5-methylaminomethyl-2-selenouridine(34) in tRNA + phosphate. In terms of biological role, involved in the post-transcriptional modification of the uridine at the wobble position (U34) of tRNA(Lys), tRNA(Glu) and tRNA(Gln). Catalyzes the conversion of 2-thiouridine (S2U-RNA) to 2-selenouridine (Se2U-RNA). Acts in a two-step process involving geranylation of 2-thiouridine (S2U) to S-geranyl-2-thiouridine (geS2U) and subsequent selenation of the latter derivative to 2-selenouridine (Se2U) in the tRNA chain. The sequence is that of tRNA 2-selenouridine synthase from Shigella sonnei (strain Ss046).